We begin with the raw amino-acid sequence, 69 residues long: TKSSRYCTTEGXDTALRHXPIGANQSAFKSKRXASESLASELIAASNRDAKCFSINRKDGKERVAKAAR.

This sequence belongs to the universal ribosomal protein uS7 family. As to quaternary structure, part of the 30S ribosomal subunit.

Its function is as follows. One of the primary rRNA binding proteins, it binds directly to 16S rRNA where it nucleates assembly of the head domain of the 30S subunit. Is located at the subunit interface close to the decoding center. The protein is Small ribosomal subunit protein uS7 (rps7) of Methanococcoides methylutens.